The primary structure comprises 236 residues: Orotidine 5'-phosphate decarboxylase (236 aa).

Substrate-binding positions include Asp-13, Lys-35, 62 to 71 (DLKFYDIPQT), Thr-123, Arg-184, Gln-193, Gly-213, and Arg-214. Residue Lys-64 is the Proton donor of the active site.

This sequence belongs to the OMP decarboxylase family. Type 1 subfamily. In terms of assembly, homodimer.

It catalyses the reaction orotidine 5'-phosphate + H(+) = UMP + CO2. The protein operates within pyrimidine metabolism; UMP biosynthesis via de novo pathway; UMP from orotate: step 2/2. Functionally, catalyzes the decarboxylation of orotidine 5'-monophosphate (OMP) to uridine 5'-monophosphate (UMP). This Coxiella burnetii (strain CbuK_Q154) (Coxiella burnetii (strain Q154)) protein is Orotidine 5'-phosphate decarboxylase.